The chain runs to 334 residues: G-protein coupled receptor 12 (334 aa).

The Extracellular portion of the chain corresponds to 1-48; that stretch reads MNEDPKVNLSGLPRDCIEAGTPENISAAVPSQGSVVESEPELVVNPWD. 2 N-linked (GlcNAc...) asparagine glycosylation sites follow: N8 and N24. The chain crosses the membrane as a helical span at residues 49 to 69; sequence IVLCSSGTLICCENAVVVLII. Residues 70–78 are Cytoplasmic-facing; it reads FHSPSLRAP. Residues 79–99 traverse the membrane as a helical segment; sequence MFLLIGSLALADLLAGLGLII. Topologically, residues 100–113 are extracellular; the sequence is NFVFAYLLQSEATK. Residues 114–134 traverse the membrane as a helical segment; sequence LVTIGLIVASFSASVCSLLAI. Residues 135 to 158 lie on the Cytoplasmic side of the membrane; the sequence is TVDRYLSLYYALTYHSERTVTFTY. A helical membrane pass occupies residues 159-179; that stretch reads VMLVMLWGTSTCLGLLPVMGW. Over 180–199 the chain is Extracellular; it reads NCLRDESTCSVVRPLTKNNA. The helical transmembrane segment at 200–220 threads the bilayer; that stretch reads AILSISFLFMFALMLQLYIQI. The Cytoplasmic portion of the chain corresponds to 221–252; sequence CKIVMRHAHQIALQHHFLATSHYVTTRKGIST. The helical transmembrane segment at 253–273 threads the bilayer; that stretch reads LALILGTFAACWMPFTLYSLI. The Extracellular segment spans residues 274–282; the sequence is ADYTYPSIY. A helical membrane pass occupies residues 283–303; sequence TYATLLPATYNSIINPVIYAF. At 304-334 the chain is on the cytoplasmic side; it reads RNQEIQKALCLICCGCIPNTLSQRARSPSDV. C317 carries S-palmitoyl cysteine lipidation. Phosphoserine occurs at positions 330 and 332.

Belongs to the G-protein coupled receptor 1 family. In terms of tissue distribution, expressed in the brain, pituitary gland and testis.

It is found in the cell membrane. Its function is as follows. Receptor with constitutive G(s) signaling activity that activates cyclic AMP. Promotes neurite outgrowth and blocks myelin inhibition in neurons. The protein is G-protein coupled receptor 12 (Gpr12) of Rattus norvegicus (Rat).